A 508-amino-acid polypeptide reads, in one-letter code: Photosystem II CP47 reaction center protein (508 aa).

Helical transmembrane passes span 21-36 (SVHI…WAGS), 101-115 (IVFS…IWHW), 140-156 (GIHL…SGAF), 203-218 (IAAG…FHLS), 237-252 (VLSS…AFIV), and 457-472 (TFAL…HGAR).

The protein belongs to the PsbB/PsbC family. PsbB subfamily. In terms of assembly, PSII is composed of 1 copy each of membrane proteins PsbA, PsbB, PsbC, PsbD, PsbE, PsbF, PsbH, PsbI, PsbJ, PsbK, PsbL, PsbM, PsbT, PsbX, PsbY, PsbZ, Psb30/Ycf12, at least 3 peripheral proteins of the oxygen-evolving complex and a large number of cofactors. It forms dimeric complexes. Binds multiple chlorophylls. PSII binds additional chlorophylls, carotenoids and specific lipids. serves as cofactor.

It localises to the plastid. It is found in the chloroplast thylakoid membrane. Its function is as follows. One of the components of the core complex of photosystem II (PSII). It binds chlorophyll and helps catalyze the primary light-induced photochemical processes of PSII. PSII is a light-driven water:plastoquinone oxidoreductase, using light energy to abstract electrons from H(2)O, generating O(2) and a proton gradient subsequently used for ATP formation. The chain is Photosystem II CP47 reaction center protein from Cycas taitungensis (Prince sago).